The primary structure comprises 267 residues: Large ribosomal subunit protein uL4 (267 aa).

Belongs to the universal ribosomal protein uL4 family. As to quaternary structure, part of the 50S ribosomal subunit.

One of the primary rRNA binding proteins, this protein initially binds near the 5'-end of the 23S rRNA. It is important during the early stages of 50S assembly. It makes multiple contacts with different domains of the 23S rRNA in the assembled 50S subunit and ribosome. In terms of biological role, forms part of the polypeptide exit tunnel. The chain is Large ribosomal subunit protein uL4 from Saccharolobus solfataricus (strain ATCC 35092 / DSM 1617 / JCM 11322 / P2) (Sulfolobus solfataricus).